Here is a 583-residue protein sequence, read N- to C-terminus: Pescadillo (583 aa).

Residues 275–329 (EKLSALSASLARMVASVEEEEAELDHFPTEGEDQEKMEVREKMEQQQSKQKKLFE) adopt a coiled-coil conformation. A BRCT domain is found at 323–416 (KQKKLFEGLK…IQLPVEEYFL (94 aa)). Disordered regions lie at residues 448–526 (RGEK…EEKA) and 558–583 (ANKL…KKKC). Acidic residues predominate over residues 455–489 (EEDEEEEGEEEEDDEEDEEDDEQSEDEEEAEEEAN). Residues 512 to 526 (AKAENRARAAEEEKA) show a composition bias toward basic and acidic residues.

It belongs to the pescadillo family. Component of the PeBoW complex, composed of bop1, pes1 and wdr12. The complex is held together by bop1, which interacts with pes1 via its N-terminal domain and with wdr12 via a high-affinity interaction between the seven-bladed beta-propeller domains of the 2 proteins. The PeBoW complex associates with the 66S pre-ribosome.

It localises to the nucleus. It is found in the nucleolus. The protein localises to the nucleoplasm. Functionally, component of the PeBoW complex, which is required for maturation of 28S and 5.8S ribosomal RNAs and formation of the 60S ribosome. The sequence is that of Pescadillo (pes) from Danio rerio (Zebrafish).